The sequence spans 129 residues: Large ribosomal subunit protein bL12 (129 aa).

The protein belongs to the bacterial ribosomal protein bL12 family. In terms of assembly, homodimer. Part of the ribosomal stalk of the 50S ribosomal subunit. Forms a multimeric L10(L12)X complex, where L10 forms an elongated spine to which 2 to 4 L12 dimers bind in a sequential fashion. Binds GTP-bound translation factors.

Its function is as follows. Forms part of the ribosomal stalk which helps the ribosome interact with GTP-bound translation factors. Is thus essential for accurate translation. The protein is Large ribosomal subunit protein bL12 of Protochlamydia amoebophila (strain UWE25).